The primary structure comprises 204 residues: Holliday junction branch migration complex subunit RuvA (204 aa).

A domain I region spans residues 1–64 (MIGRLRGILL…EDAQLLYGFN (64 aa)). Residues 65 to 143 (TVKERALFRE…GWGAGDLFTP (79 aa)) are domain II. Positions 144–155 (FTDAAPTDSAAA) are flexible linker. The segment at 156 to 204 (SSNSAEEEAVSALLALGYKPTQASKVVSQIAKPDMSSEQLIREALKSMV) is domain III.

The protein belongs to the RuvA family. As to quaternary structure, homotetramer. Forms an RuvA(8)-RuvB(12)-Holliday junction (HJ) complex. HJ DNA is sandwiched between 2 RuvA tetramers; dsDNA enters through RuvA and exits via RuvB. An RuvB hexamer assembles on each DNA strand where it exits the tetramer. Each RuvB hexamer is contacted by two RuvA subunits (via domain III) on 2 adjacent RuvB subunits; this complex drives branch migration. In the full resolvosome a probable DNA-RuvA(4)-RuvB(12)-RuvC(2) complex forms which resolves the HJ.

Its subcellular location is the cytoplasm. Functionally, the RuvA-RuvB-RuvC complex processes Holliday junction (HJ) DNA during genetic recombination and DNA repair, while the RuvA-RuvB complex plays an important role in the rescue of blocked DNA replication forks via replication fork reversal (RFR). RuvA specifically binds to HJ cruciform DNA, conferring on it an open structure. The RuvB hexamer acts as an ATP-dependent pump, pulling dsDNA into and through the RuvAB complex. HJ branch migration allows RuvC to scan DNA until it finds its consensus sequence, where it cleaves and resolves the cruciform DNA. This chain is Holliday junction branch migration complex subunit RuvA, found in Vibrio parahaemolyticus serotype O3:K6 (strain RIMD 2210633).